Here is a 130-residue protein sequence, read N- to C-terminus: Small ribosomal subunit protein uS11 (130 aa).

Belongs to the universal ribosomal protein uS11 family. In terms of assembly, part of the 30S ribosomal subunit. Interacts with proteins S7 and S18. Binds to IF-3.

Located on the platform of the 30S subunit, it bridges several disparate RNA helices of the 16S rRNA. Forms part of the Shine-Dalgarno cleft in the 70S ribosome. This chain is Small ribosomal subunit protein uS11, found in Xylella fastidiosa (strain M23).